A 102-amino-acid chain; its full sequence is Monothiol glutaredoxin-S10 (102 aa).

Residues 1 to 101 (MDVVARLASQ…ILLKEAGALW (101 aa)) enclose the Glutaredoxin domain. Residue Cys21 participates in [2Fe-2S] cluster binding. The Responsive for interaction with TGA factors signature appears at 99–102 (ALWL).

The protein belongs to the glutaredoxin family. CC-type subfamily.

The protein localises to the cytoplasm. It is found in the nucleus. Functionally, may only reduce GSH-thiol disulfides, but not protein disulfides. In Arabidopsis thaliana (Mouse-ear cress), this protein is Monothiol glutaredoxin-S10 (GRXS10).